Consider the following 526-residue polypeptide: Lycopene epsilon cyclase, chloroplastic (526 aa).

Residue 108-136 coordinates NAD(+); it reads LVVIGCGPAGLALAAESAKLGLNVGLVGP. A run of 2 helical transmembrane segments spans residues 443–463 and 477–497; these read FFLF…RSFF and FLGS…MFII.

The protein belongs to the lycopene cyclase family.

The protein resides in the plastid. Its subcellular location is the chloroplast membrane. The catalysed reaction is a carotenoid psi-end group = a carotenoid epsilon-end group. It functions in the pathway carotenoid biosynthesis; alpha-zeacarotene biosynthesis. The protein operates within carotenoid biosynthesis; delta-carotene biosynthesis. Catalyzes the single cyclization reaction which converts lycopene to delta-carotene and neurosporene to alpha-zeacarotene. Required for lutein biosynthesis. This is Lycopene epsilon cyclase, chloroplastic from Solanum lycopersicum (Tomato).